The following is an 872-amino-acid chain: Alanine--tRNA ligase (872 aa).

Residues H567, H571, C669, and H673 each contribute to the Zn(2+) site.

Belongs to the class-II aminoacyl-tRNA synthetase family. Zn(2+) is required as a cofactor.

Its subcellular location is the cytoplasm. The catalysed reaction is tRNA(Ala) + L-alanine + ATP = L-alanyl-tRNA(Ala) + AMP + diphosphate. In terms of biological role, catalyzes the attachment of alanine to tRNA(Ala) in a two-step reaction: alanine is first activated by ATP to form Ala-AMP and then transferred to the acceptor end of tRNA(Ala). Also edits incorrectly charged Ser-tRNA(Ala) and Gly-tRNA(Ala) via its editing domain. In Streptococcus pneumoniae serotype 2 (strain D39 / NCTC 7466), this protein is Alanine--tRNA ligase.